Here is a 509-residue protein sequence, read N- to C-terminus: MSQWWKEAVVYQIYPRSFYDSNGDGFGDLQGVIQKLDYIKRLGADVIWLCPVFDSPQDDNGYDISDYRSIYEKFGTNDDMFQLIDEVHKRGMKIIMDLVVNHSSDEHAWFAESRKSKDNPYRDYYFWKDPKADGSEPNNWGAIFSGPAWSAMSTAQYYLHYFSKKQPDLNWENEAVRREVYDLMTFWMDRGVDGWRMDVIGSISKFVDFPDYETDDSRPYVVGRYHSNGPRLHEFIQEMNREVLSRYDCMTVGEAGGSDVEEAKKYTDPSRHELNMIFTFEHMDIDTKQHSPNGKWQMKPFDPIALKKTMTRWQTALMNVGWNTLYFENHDQPRVISAGAMTRELRKQSRQSISNSSARHEGNPFIYQGEEIGMTNSEMPLEMYDDLEIKNAYRELVIENKTMTEEDFRKAVAKKGRDHARTPMQWDDGKYAGFTDGEAWLAVNPRYQEINVKESLADEDSIFYYYQKLIGLRKQNKVIVYGDYRLLLEEDPRIFAYIREYRGEKLLVP.

Asp198 functions as the Nucleophile in the catalytic mechanism. The Proton donor role is filled by Glu254.

This sequence belongs to the glycosyl hydrolase 13 family.

The protein resides in the cytoplasm. The enzyme catalyses Hydrolysis of (1-&gt;6)-alpha-D-glucosidic linkages in some oligosaccharides produced from starch and glycogen by alpha-amylase, and in isomaltose.. This is Oligo-1,6-glucosidase (malL) from Bacillus sp. (strain F5).